A 373-amino-acid chain; its full sequence is Probable pectin lyase C (373 aa).

The signal sequence occupies residues 1 to 17 (MKKYLLSLLAAVTYTTA). 2 disulfide bridges follow: C78–C95 and C87–C215. N-linked (GlcNAc...) asparagine glycosylation is found at N140 and N229. R245 is an active-site residue. A disulfide bond links C315 and C323.

This sequence belongs to the polysaccharide lyase 1 family.

Its subcellular location is the secreted. It carries out the reaction Eliminative cleavage of (1-&gt;4)-alpha-D-galacturonan methyl ester to give oligosaccharides with 4-deoxy-6-O-methyl-alpha-D-galact-4-enuronosyl groups at their non-reducing ends.. In terms of biological role, pectinolytic enzymes consist of four classes of enzymes: pectin lyase, polygalacturonase, pectin methylesterase and rhamnogalacturonase. Among pectinolytic enzymes, pectin lyase is the most important in depolymerization of pectin, since it cleaves internal glycosidic bonds of highly methylated pectins. The protein is Probable pectin lyase C (pelC) of Emericella nidulans (strain FGSC A4 / ATCC 38163 / CBS 112.46 / NRRL 194 / M139) (Aspergillus nidulans).